A 268-amino-acid chain; its full sequence is Putative hydro-lyase ABAYE2440 (268 aa).

The protein belongs to the D-glutamate cyclase family.

This is Putative hydro-lyase ABAYE2440 from Acinetobacter baumannii (strain AYE).